The sequence spans 642 residues: Threonine--tRNA ligase (642 aa).

A TGS domain is found at M1–T61. The tract at residues D243–P534 is catalytic. At K286 the chain carries N6-acetyllysine. Residues C334, H385, and H511 each contribute to the Zn(2+) site.

The protein belongs to the class-II aminoacyl-tRNA synthetase family. Homodimer. Zn(2+) is required as a cofactor.

It is found in the cytoplasm. The enzyme catalyses tRNA(Thr) + L-threonine + ATP = L-threonyl-tRNA(Thr) + AMP + diphosphate + H(+). Catalyzes the attachment of threonine to tRNA(Thr) in a two-step reaction: L-threonine is first activated by ATP to form Thr-AMP and then transferred to the acceptor end of tRNA(Thr). Also edits incorrectly charged L-seryl-tRNA(Thr). The sequence is that of Threonine--tRNA ligase from Escherichia coli O9:H4 (strain HS).